The following is an 88-amino-acid chain: UPF0367 protein AM1_1885 (88 aa).

The protein belongs to the UPF0367 family.

In Acaryochloris marina (strain MBIC 11017), this protein is UPF0367 protein AM1_1885.